The chain runs to 323 residues: tRNA U34 carboxymethyltransferase (323 aa).

Carboxy-S-adenosyl-L-methionine is bound by residues Lys91, Trp105, Lys110, Gly130, 152-154 (DPT), 181-182 (IE), Met196, Tyr200, and Arg315.

It belongs to the class I-like SAM-binding methyltransferase superfamily. CmoB family. In terms of assembly, homotetramer.

The catalysed reaction is carboxy-S-adenosyl-L-methionine + 5-hydroxyuridine(34) in tRNA = 5-carboxymethoxyuridine(34) in tRNA + S-adenosyl-L-homocysteine + H(+). Catalyzes carboxymethyl transfer from carboxy-S-adenosyl-L-methionine (Cx-SAM) to 5-hydroxyuridine (ho5U) to form 5-carboxymethoxyuridine (cmo5U) at position 34 in tRNAs. In Escherichia coli O6:H1 (strain CFT073 / ATCC 700928 / UPEC), this protein is tRNA U34 carboxymethyltransferase.